The sequence spans 400 residues: Subtilisin-like protease 7 (400 aa).

The first 20 residues, 1 to 20 (MGFITKAIPLALAAASVING), serve as a signal peptide directing secretion. Residues 21-119 (AEIMETRAGV…IERDARVQIN (99 aa)) constitute a propeptide that is removed on maturation. Residues 36 to 118 (KYIVVMNDGM…YIERDARVQI (83 aa)) enclose the Inhibitor I9 domain. Residue N58 is glycosylated (N-linked (GlcNAc...) asparagine). The Peptidase S8 domain occupies 129–400 (SWGLARVGSK…SKLINNGSGM (272 aa)). Catalysis depends on charge relay system residues D161 and H192. N-linked (GlcNAc...) asparagine glycans are attached at residues N222 and N252. The active-site Charge relay system is S346. N-linked (GlcNAc...) asparagine glycosylation is present at N396.

It belongs to the peptidase S8 family.

The protein localises to the secreted. In terms of biological role, secreted subtilisin-like serine protease with keratinolytic activity that contributes to pathogenicity. The sequence is that of Subtilisin-like protease 7 (SUB7) from Arthroderma benhamiae (Trichophyton mentagrophytes).